Here is a 226-residue protein sequence, read N- to C-terminus: MIELRHVSHHYDERPVLRPLSLTLRERRIGVVGSNGSGKSTFARLLNALLLPAAGQVLVDGLDTRQDPKGVRRKVGFVFQNPDHQIVFPVVEEDLAFGLKNLKLPPAEVEARIGEVLERYDLGEYRQHPSHLLSGGQKQLLAISGVLVMRPEYVVFDEPTTLLDLRNRNRVAAAIRELPQTAIVVTHDLDLLRDFERVLVFEAGELIADAPPAEALRVYRERMTWP.

The 224-residue stretch at 2 to 225 (IELRHVSHHY…LRVYRERMTW (224 aa)) folds into the ABC transporter domain. 33 to 40 (GSNGSGKS) lines the ATP pocket.

It belongs to the ABC transporter superfamily.

Its subcellular location is the cell membrane. Its function is as follows. Probably part of an ABC transporter complex. Responsible for energy coupling to the transport system. This chain is Putative ABC transporter ATP-binding protein DR_2469, found in Deinococcus radiodurans (strain ATCC 13939 / DSM 20539 / JCM 16871 / CCUG 27074 / LMG 4051 / NBRC 15346 / NCIMB 9279 / VKM B-1422 / R1).